The following is a 333-amino-acid chain: Transcription termination factor MTERF6, chloroplastic/mitochondrial (333 aa).

The protein belongs to the mTERF family.

The protein localises to the plastid. Its subcellular location is the chloroplast. It localises to the mitochondrion. Transcription termination factor essential for chloroplast development. Required for maturation of 16S rRNA, 18S rRNA and 23S rRNA in the chloroplast. Binds to a specific region within the tRNA(Ile)(GAU) gene at a position adjacent to and downstream of the 16S rRNA gene. Required for the maturation of tRNA(Ile)(GAU). Binds to double-stranded DNA. The sequence is that of Transcription termination factor MTERF6, chloroplastic/mitochondrial from Arabidopsis thaliana (Mouse-ear cress).